Here is a 236-residue protein sequence, read N- to C-terminus: Pyridoxine 5'-phosphate synthase (236 aa).

Asparagine 7 lines the 3-amino-2-oxopropyl phosphate pocket. Position 9 to 10 (9 to 10) interacts with 1-deoxy-D-xylulose 5-phosphate; it reads DH. Position 18 (arginine 18) interacts with 3-amino-2-oxopropyl phosphate. Residue histidine 43 is the Proton acceptor of the active site. 1-deoxy-D-xylulose 5-phosphate is bound by residues arginine 45 and histidine 50. Residue glutamate 69 is the Proton acceptor of the active site. Threonine 99 is a 1-deoxy-D-xylulose 5-phosphate binding site. Histidine 190 (proton donor) is an active-site residue. 3-amino-2-oxopropyl phosphate contacts are provided by residues glycine 191 and 212-213; that span reads GH.

It belongs to the PNP synthase family. Homooctamer; tetramer of dimers.

It localises to the cytoplasm. The enzyme catalyses 3-amino-2-oxopropyl phosphate + 1-deoxy-D-xylulose 5-phosphate = pyridoxine 5'-phosphate + phosphate + 2 H2O + H(+). It participates in cofactor biosynthesis; pyridoxine 5'-phosphate biosynthesis; pyridoxine 5'-phosphate from D-erythrose 4-phosphate: step 5/5. Functionally, catalyzes the complicated ring closure reaction between the two acyclic compounds 1-deoxy-D-xylulose-5-phosphate (DXP) and 3-amino-2-oxopropyl phosphate (1-amino-acetone-3-phosphate or AAP) to form pyridoxine 5'-phosphate (PNP) and inorganic phosphate. The sequence is that of Pyridoxine 5'-phosphate synthase from Desulfosudis oleivorans (strain DSM 6200 / JCM 39069 / Hxd3) (Desulfococcus oleovorans).